The chain runs to 256 residues: Imidazole glycerol phosphate synthase subunit HisF (256 aa).

Active-site residues include D12 and D131.

The protein belongs to the HisA/HisF family. As to quaternary structure, heterodimer of HisH and HisF.

It localises to the cytoplasm. The enzyme catalyses 5-[(5-phospho-1-deoxy-D-ribulos-1-ylimino)methylamino]-1-(5-phospho-beta-D-ribosyl)imidazole-4-carboxamide + L-glutamine = D-erythro-1-(imidazol-4-yl)glycerol 3-phosphate + 5-amino-1-(5-phospho-beta-D-ribosyl)imidazole-4-carboxamide + L-glutamate + H(+). Its pathway is amino-acid biosynthesis; L-histidine biosynthesis; L-histidine from 5-phospho-alpha-D-ribose 1-diphosphate: step 5/9. Its function is as follows. IGPS catalyzes the conversion of PRFAR and glutamine to IGP, AICAR and glutamate. The HisF subunit catalyzes the cyclization activity that produces IGP and AICAR from PRFAR using the ammonia provided by the HisH subunit. The polypeptide is Imidazole glycerol phosphate synthase subunit HisF (Pseudomonas syringae pv. syringae (strain B728a)).